We begin with the raw amino-acid sequence, 161 residues long: Phosphopantetheine adenylyltransferase (161 aa).

Substrate is bound at residue Thr9. ATP-binding positions include 9–10 and His17; that span reads TF. The substrate site is built by Lys41, Leu73, and Arg87. ATP-binding positions include 88-90, Glu98, and 123-129; these read GLR and YQFISGT.

Belongs to the bacterial CoaD family. In terms of assembly, homohexamer. Requires Mg(2+) as cofactor.

It localises to the cytoplasm. It catalyses the reaction (R)-4'-phosphopantetheine + ATP + H(+) = 3'-dephospho-CoA + diphosphate. It functions in the pathway cofactor biosynthesis; coenzyme A biosynthesis; CoA from (R)-pantothenate: step 4/5. Its function is as follows. Reversibly transfers an adenylyl group from ATP to 4'-phosphopantetheine, yielding dephospho-CoA (dPCoA) and pyrophosphate. The sequence is that of Phosphopantetheine adenylyltransferase from Janthinobacterium sp. (strain Marseille) (Minibacterium massiliensis).